A 110-amino-acid chain; its full sequence is UPF0060 membrane protein MT2717 (110 aa).

Transmembrane regions (helical) follow at residues 6–26, 32–52, 61–81, and 90–110; these read ILLF…VWQG, GWLW…FATL, VLAA…MALD, and VIGA…PRGH.

This sequence belongs to the UPF0060 family.

It is found in the cell membrane. The protein is UPF0060 membrane protein MT2717 of Mycobacterium tuberculosis (strain CDC 1551 / Oshkosh).